Consider the following 50-residue polypeptide: Defensin-like protein 1 (50 aa).

Disulfide bonds link C2-C50, C14-C35, C20-C44, and C24-C46.

Belongs to the DEFL family.

Its subcellular location is the secreted. Functionally, possesses antimicrobial activity sensitive to inorganic cations. Binds specifically to the fungal plasma membrane. Has no inhibitory effect on insect gut alpha-amylase. The protein is Defensin-like protein 1 of Aesculus hippocastanum (Horse chestnut).